The primary structure comprises 330 residues: Lipoyl synthase (330 aa).

Residues cysteine 77, cysteine 82, cysteine 88, cysteine 103, cysteine 107, cysteine 110, and serine 317 each coordinate [4Fe-4S] cluster. In terms of domain architecture, Radical SAM core spans 89 to 306 (FNHGTATFMI…RSEAERMGFE (218 aa)).

The protein belongs to the radical SAM superfamily. Lipoyl synthase family. Requires [4Fe-4S] cluster as cofactor.

The protein localises to the cytoplasm. The enzyme catalyses [[Fe-S] cluster scaffold protein carrying a second [4Fe-4S](2+) cluster] + N(6)-octanoyl-L-lysyl-[protein] + 2 oxidized [2Fe-2S]-[ferredoxin] + 2 S-adenosyl-L-methionine + 4 H(+) = [[Fe-S] cluster scaffold protein] + N(6)-[(R)-dihydrolipoyl]-L-lysyl-[protein] + 4 Fe(3+) + 2 hydrogen sulfide + 2 5'-deoxyadenosine + 2 L-methionine + 2 reduced [2Fe-2S]-[ferredoxin]. Its pathway is protein modification; protein lipoylation via endogenous pathway; protein N(6)-(lipoyl)lysine from octanoyl-[acyl-carrier-protein]: step 2/2. Catalyzes the radical-mediated insertion of two sulfur atoms into the C-6 and C-8 positions of the octanoyl moiety bound to the lipoyl domains of lipoate-dependent enzymes, thereby converting the octanoylated domains into lipoylated derivatives. This Actinobacillus pleuropneumoniae serotype 3 (strain JL03) protein is Lipoyl synthase.